Reading from the N-terminus, the 313-residue chain is Homoserine O-succinyltransferase (313 aa).

The active-site Acyl-thioester intermediate is the C142. The substrate site is built by K163 and S192. Catalysis depends on H235, which acts as the Proton acceptor. The active site involves E237. R249 serves as a coordination point for substrate.

The protein belongs to the MetA family.

The protein resides in the cytoplasm. It carries out the reaction L-homoserine + succinyl-CoA = O-succinyl-L-homoserine + CoA. Its pathway is amino-acid biosynthesis; L-methionine biosynthesis via de novo pathway; O-succinyl-L-homoserine from L-homoserine: step 1/1. In terms of biological role, transfers a succinyl group from succinyl-CoA to L-homoserine, forming succinyl-L-homoserine. The chain is Homoserine O-succinyltransferase from Shewanella sp. (strain ANA-3).